The following is a 411-amino-acid chain: Lissencephaly-1 homolog (411 aa).

Residues 7–39 (QREELNKAIADYLASNGFMEALESFKKETDMPG) enclose the LisH domain. The stretch at 54–80 (TSVIRLQKKVMDLEGRLAEAEKEYISG) forms a coiled coil. Over residues 77 to 89 (YISGTPSREKRSP) the composition is skewed to basic and acidic residues. The tract at residues 77–96 (YISGTPSREKRSPTEWIPRP) is disordered. WD repeat units follow at residues 104–145 (GHRA…RTIK), 146–187 (GHTD…RTMH), 188–227 (GHDH…CVRT), 230–269 (GHRD…CKLE), 272–334 (EHDH…ALFT), 337–376 (GHDN…CCKT), and 379–411 (AHSH…WECR).

Belongs to the WD repeat LIS1/nudF family.

It localises to the cytoplasm. Its subcellular location is the cytoskeleton. The protein resides in the microtubule organizing center. The protein localises to the centrosome. Positively regulates the activity of the minus-end directed microtubule motor protein dynein. May enhance dynein-mediated microtubule sliding by targeting dynein to the microtubule plus end. Required for several dynein- and microtubule-dependent processes. The protein is Lissencephaly-1 homolog of Ixodes scapularis (Black-legged tick).